Here is a 527-residue protein sequence, read N- to C-terminus: Peptide chain release factor 3 (527 aa).

In terms of domain architecture, tr-type G spans 9 to 277; sequence AKRRTFAIIS…AVVNWAPKPL (269 aa). GTP contacts are provided by residues 18–25, 86–90, and 140–143; these read SHPDAGKT, DTPGH, and NKLD.

It belongs to the TRAFAC class translation factor GTPase superfamily. Classic translation factor GTPase family. PrfC subfamily.

It localises to the cytoplasm. Functionally, increases the formation of ribosomal termination complexes and stimulates activities of RF-1 and RF-2. It binds guanine nucleotides and has strong preference for UGA stop codons. It may interact directly with the ribosome. The stimulation of RF-1 and RF-2 is significantly reduced by GTP and GDP, but not by GMP. This is Peptide chain release factor 3 from Pseudomonas syringae pv. syringae (strain B728a).